Here is a 716-residue protein sequence, read N- to C-terminus: Zinc finger CCCH domain-containing protein 30 (716 aa).

ANK repeat units follow at residues 90–120 (DYRT…DVNR) and 125–157 (DQTT…DLNL). The interval 201–231 (VTNVPNRSSSPCHSPTGENGGSGSGSPLGSP) is disordered. A compositionally biased stretch (polar residues) spans 203–213 (NVPNRSSSPCH). 2 consecutive C3H1-type zinc fingers follow at residues 306–328 (PCPD…HGVF) and 336–360 (QYRT…HTPE). Positions 521–562 (FQQQQQQQQSMLSPINTSFSSPKSVDHSLFSGGGRMSPRNVV) are disordered. Residues 530–543 (SMLSPINTSFSSPK) are compositionally biased toward polar residues. S566 bears the Phosphoserine mark. A compositionally biased stretch (low complexity) spans 583-594 (QQQQQQQQQQHQ). Disordered stretches follow at residues 583 to 638 (QQQQ…MSSE) and 667 to 692 (PAEA…PVEP). Polar residues predominate over residues 605-630 (TNSSPIVGSPVNNNTWSSKWGSSNGQ).

The polypeptide is Zinc finger CCCH domain-containing protein 30 (Arabidopsis thaliana (Mouse-ear cress)).